A 608-amino-acid polypeptide reads, in one-letter code: MNHFPKLLSSQIGFDVAQTMLENFDRHYRIFREAAVDAKTLYERADWHGLQRLARERITSYDDRVQECVEVLQDEYDAENIDDEVWQQIKLHYIGLLTSHRQPECAETFFNSVCCKILHRSYFSNDFIFVRPAISTEYLENDEPAAKPTYRAYYPGTDGLAATLERIVTNFQLEPPFEDLTRDIGCVMQAITDEFGEFDAAPNFQIHVLSSLFFRNKSAYIVGRIINADRVLPFAVPIRHVRPGLLALDTLLLRRDLLQIIFSFSHSYFLVDMGVPSAYVEFLCTIMPGKPKAEIYTSVGLQKQGKNLFYRDLLHHLSHSSDRFIIAPGIKGLVMLVFTLPSFPYVFKIIKDHFPPPKETTREQIMEKYQLVKRHDRLGRMADTLEYSSVALPISRLDHALVRELEKEVPSLLEYEDGNLVIKHLYIERRMIPLNLYLQNGTDAEIEHGVKEYGNAVKELMKANIFPGDMLYKNFGVTRHGRVVFYDYDEIEYLTDCNVRRVPPPRNEEDELSGEPWYTVGPHDIFPETYGPFLLGDPRVRAVFMKHHADFFEASLWQASKDKLLQGELPDFFPYDVSLRFSVRYPDRFDATPDAGDGDSAGNAQRAA.

Residues 327-333 (APGIKGL) and lysine 348 contribute to the ATP site. Aspartate 383 is an active-site residue.

The protein belongs to the AceK family.

The protein localises to the cytoplasm. The enzyme catalyses L-seryl-[isocitrate dehydrogenase] + ATP = O-phospho-L-seryl-[isocitrate dehydrogenase] + ADP + H(+). In terms of biological role, bifunctional enzyme which can phosphorylate or dephosphorylate isocitrate dehydrogenase (IDH) on a specific serine residue. This is a regulatory mechanism which enables bacteria to bypass the Krebs cycle via the glyoxylate shunt in response to the source of carbon. When bacteria are grown on glucose, IDH is fully active and unphosphorylated, but when grown on acetate or ethanol, the activity of IDH declines drastically concomitant with its phosphorylation. In Burkholderia ambifaria (strain ATCC BAA-244 / DSM 16087 / CCUG 44356 / LMG 19182 / AMMD) (Burkholderia cepacia (strain AMMD)), this protein is Isocitrate dehydrogenase kinase/phosphatase.